Here is a 427-residue protein sequence, read N- to C-terminus: Imidazolonepropionase (427 aa).

Fe(3+)-binding residues include histidine 81 and histidine 83. Histidine 81 and histidine 83 together coordinate Zn(2+). Positions 90, 153, and 186 each coordinate 4-imidazolone-5-propanoate. Tyrosine 153 is an N-formimidoyl-L-glutamate binding site. Histidine 260 serves as a coordination point for Fe(3+). Histidine 260 is a Zn(2+) binding site. 4-imidazolone-5-propanoate is bound at residue glutamate 263. Residue aspartate 335 participates in Fe(3+) binding. Aspartate 335 serves as a coordination point for Zn(2+). 2 residues coordinate N-formimidoyl-L-glutamate: asparagine 337 and glycine 339. Residue serine 340 coordinates 4-imidazolone-5-propanoate.

The protein belongs to the metallo-dependent hydrolases superfamily. HutI family. Zn(2+) serves as cofactor. The cofactor is Fe(3+).

The protein resides in the cytoplasm. The enzyme catalyses 4-imidazolone-5-propanoate + H2O = N-formimidoyl-L-glutamate. It functions in the pathway amino-acid degradation; L-histidine degradation into L-glutamate; N-formimidoyl-L-glutamate from L-histidine: step 3/3. Catalyzes the hydrolytic cleavage of the carbon-nitrogen bond in imidazolone-5-propanoate to yield N-formimidoyl-L-glutamate. It is the third step in the universal histidine degradation pathway. This chain is Imidazolonepropionase, found in Chloroflexus aggregans (strain MD-66 / DSM 9485).